Reading from the N-terminus, the 689-residue chain is Acetyl-coenzyme A synthetase 2-like, mitochondrial (689 aa).

A mitochondrion-targeting transit peptide spans 1–37 (MAARTLGRGVGRLLGSLRGLSGQPARPPCGVSAPRRA). A disordered region spans residues 17 to 46 (LRGLSGQPARPPCGVSAPRRAASGPSGSAP). The span at 32–46 (SAPRRAASGPSGSAP) shows a compositional bias: low complexity. CoA-binding positions include 224 to 227 (RGGR) and threonine 341. Lysine 396 bears the N6-acetyllysine mark. Residues 417–419 (GEP), 441–446 (DTWWQT), aspartate 533, and arginine 548 contribute to the ATP site. Serine 556 is a CoA binding site. Arginine 559 contacts ATP. Lysine 642 bears the N6-acetyllysine mark.

Belongs to the ATP-dependent AMP-binding enzyme family. In terms of assembly, interacts with SIRT3. In terms of processing, reversibly acetylated on Lys-642. The acetyl-CoA synthase activity is inhibited by acetylation and activated by deacetylation mediated by the deacetylase SIRT3.

The protein localises to the mitochondrion matrix. It carries out the reaction acetate + ATP + CoA = acetyl-CoA + AMP + diphosphate. The enzyme catalyses propanoate + ATP + CoA = propanoyl-CoA + AMP + diphosphate. Inhibited by acetylation at Lys-642 and activated by deacetylation mediated by the deacetylase SIRT3. In terms of biological role, catalyzes the synthesis of acetyl-CoA from short-chain fatty acids. Acetate is the preferred substrate. Can also utilize propionate with a much lower affinity. Provides acetyl-CoA that is utilized mainly for oxidation under ketogenic conditions. Involved in thermogenesis under ketogenic conditions, using acetate as a vital fuel when carbohydrate availability is insufficient. The polypeptide is Acetyl-coenzyme A synthetase 2-like, mitochondrial (ACSS1) (Homo sapiens (Human)).